The sequence spans 68 residues: Alpha/kappa-conotoxin-like pl14.2 (68 aa).

Positions 1 to 27 (MPSVRSVTCCCLLWMMFSVQLVTPGSP) are cleaved as a signal peptide. Residues 28 to 39 (ATAQLSGQRTAR) constitute a propeptide that is removed on maturation. 2 disulfides stabilise this stretch: C46/C61 and C50/C63. The residue at position 64 (R64) is an Arginine amide. A propeptide spanning residues 65–68 (GKRD) is cleaved from the precursor.

Belongs to the conotoxin J superfamily. Expressed by the venom duct.

It localises to the secreted. In terms of biological role, highly inhibits both nicotinic acetylcholine receptors (neuronal (alpha-3/beta-4) and muscular (alpha-1/beta-1/epsilon/delta) subtypes) and the voltage-gated potassium channel Kv1.6/KCNA6 subtype. The polypeptide is Alpha/kappa-conotoxin-like pl14.2 (Conus planorbis (Planorbis cone)).